The following is a 235-amino-acid chain: 1-(5-phosphoribosyl)-5-[(5-phosphoribosylamino)methylideneamino] imidazole-4-carboxamide isomerase (235 aa).

Asp8 serves as the catalytic Proton acceptor. Asp127 acts as the Proton donor in catalysis.

The protein belongs to the HisA/HisF family.

It is found in the cytoplasm. It carries out the reaction 1-(5-phospho-beta-D-ribosyl)-5-[(5-phospho-beta-D-ribosylamino)methylideneamino]imidazole-4-carboxamide = 5-[(5-phospho-1-deoxy-D-ribulos-1-ylimino)methylamino]-1-(5-phospho-beta-D-ribosyl)imidazole-4-carboxamide. It functions in the pathway amino-acid biosynthesis; L-histidine biosynthesis; L-histidine from 5-phospho-alpha-D-ribose 1-diphosphate: step 4/9. The sequence is that of 1-(5-phosphoribosyl)-5-[(5-phosphoribosylamino)methylideneamino] imidazole-4-carboxamide isomerase from Nautilia profundicola (strain ATCC BAA-1463 / DSM 18972 / AmH).